Reading from the N-terminus, the 711-residue chain is Protein ACTIVITY OF BC1 COMPLEX KINASE 3, chloroplastic (711 aa).

A chloroplast-targeting transit peptide spans Met-1–Arg-42. The 331-residue stretch at Ser-216–Phe-546 folds into the Protein kinase domain. Residues Ile-222–Val-230 and Lys-245 contribute to the ATP site. Asp-379 serves as the catalytic Proton acceptor.

This sequence belongs to the protein kinase superfamily. ADCK protein kinase family. As to quaternary structure, interacts with ABC1K1 in plastoglobules (PG). Interacts with PGM48.

Its subcellular location is the plastid. It localises to the chloroplast. The protein localises to the plastoglobule. It catalyses the reaction L-seryl-[protein] + ATP = O-phospho-L-seryl-[protein] + ADP + H(+). The enzyme catalyses L-threonyl-[protein] + ATP = O-phospho-L-threonyl-[protein] + ADP + H(+). Kinase that can phosphorylate the tocopherol cyclase VTE1, a key enzyme of tocopherol (vitamin E) metabolism and involved in the recycling of oxidated alpha-tocopherol quinone, possibly stabilizing it at plastoglobules. Also regulates membrane prenylquinone composition. Required for photooxidative stress responses to prevent photosystem II core and chlorophyll degradations. Together with ABC1K1, contributes to plastoglobule (PG) function in prenyl-lipid metabolism, stress response, and thylakoid remodeling. Promotes photodamage of chloroplasts under continuous red light, thus working in opposition to ABC1K1. This chain is Protein ACTIVITY OF BC1 COMPLEX KINASE 3, chloroplastic, found in Arabidopsis thaliana (Mouse-ear cress).